The primary structure comprises 151 residues: Superoxide dismutase [Cu-Zn] 4 (151 aa).

Cu cation is bound by residues histidine 45, histidine 47, and histidine 62. The cysteines at positions 56 and 145 are disulfide-linked. Zn(2+) is bound by residues histidine 62, histidine 70, histidine 79, and aspartate 82. A Cu cation-binding site is contributed by histidine 120.

Belongs to the Cu-Zn superoxide dismutase family. In terms of assembly, homodimer. Requires Cu cation as cofactor. Zn(2+) is required as a cofactor.

The protein resides in the cytoplasm. The catalysed reaction is 2 superoxide + 2 H(+) = H2O2 + O2. Destroys radicals which are normally produced within the cells and which are toxic to biological systems. Protects spores from cellular damage caused by UV LIGHT. This Dictyostelium discoideum (Social amoeba) protein is Superoxide dismutase [Cu-Zn] 4 (sodD).